Reading from the N-terminus, the 152-residue chain is Ribosome maturation factor RimP (152 aa).

It belongs to the RimP family.

Its subcellular location is the cytoplasm. Required for maturation of 30S ribosomal subunits. The protein is Ribosome maturation factor RimP of Alkalilimnicola ehrlichii (strain ATCC BAA-1101 / DSM 17681 / MLHE-1).